A 432-amino-acid chain; its full sequence is Enolase (432 aa).

Glutamine 163 provides a ligand contact to (2R)-2-phosphoglycerate. Glutamate 205 functions as the Proton donor in the catalytic mechanism. Residues aspartate 242, glutamate 285, and aspartate 312 each contribute to the Mg(2+) site. (2R)-2-phosphoglycerate contacts are provided by lysine 337, arginine 366, serine 367, and lysine 388. Lysine 337 serves as the catalytic Proton acceptor.

The protein belongs to the enolase family. Mg(2+) is required as a cofactor.

Its subcellular location is the cytoplasm. It localises to the secreted. It is found in the cell surface. The catalysed reaction is (2R)-2-phosphoglycerate = phosphoenolpyruvate + H2O. Its pathway is carbohydrate degradation; glycolysis; pyruvate from D-glyceraldehyde 3-phosphate: step 4/5. Catalyzes the reversible conversion of 2-phosphoglycerate (2-PG) into phosphoenolpyruvate (PEP). It is essential for the degradation of carbohydrates via glycolysis. The polypeptide is Enolase (Desulfovibrio desulfuricans (strain ATCC 27774 / DSM 6949 / MB)).